A 660-amino-acid chain; its full sequence is Leucine-rich repeat transmembrane protein FLRT2 (660 aa).

The first 35 residues, 1 to 35, serve as a signal peptide directing secretion; that stretch reads MGLQTTKWPGRGAFILKFWLIISLGLYLQVSKLLA. Cystine bridges form between cysteine 36/cysteine 42 and cysteine 40/cysteine 49. An LRRNT domain is found at 36-63; sequence CPSVCRCDRNFVYCNERSLTSVPLGIPE. Topologically, residues 36-540 are extracellular; that stretch reads CPSVCRCDRN…QTTSHSMGSP (505 aa). LRR repeat units follow at residues 62 to 87, 88 to 108, 109 to 131, 132 to 157, 159 to 181, 183 to 202, 203 to 228, 229 to 251, 252 to 274, and 275 to 298; these read PEGV…LHNV, QSVH…MNLP, KNVR…ALAQ, LLKL…AFRE, ISLK…LPVD, QELR…AFQN, LTSL…TFSH, LTKL…DLPG, THLI…AFAN, and LRKL…VFDH. A glycan (N-linked (GlcNAc...) asparagine) is linked at asparagine 202. Positions 310 to 362 constitute an LRRCT domain; the sequence is NPWFCDCSIKWVTEWLKYIPSSLNVRGFMCQGPEQVRGMAVRELNMNLLSCPT. 2 cysteine pairs are disulfide-bonded: cysteine 314–cysteine 339 and cysteine 316–cysteine 360. Positions 371-396 are enriched in low complexity; sequence TPAPSTVSPTTQSPTLSVPSPSRGSV. A disordered region spans residues 371 to 413; sequence TPAPSTVSPTTQSPTLSVPSPSRGSVPPAPTPSKLPTIPDWDG. The 99-residue stretch at 419 to 517 folds into the Fibronectin type-III domain; that stretch reads PPISERIQLS…ICSEATTHAS (99 aa). Residues 541–561 traverse the membrane as a helical segment; sequence FLLAGLIGGAVIFVLVVLLSV. Residues 562–660 lie on the Cytoplasmic side of the membrane; that stretch reads FCWHMHKKGR…SVPDLEHCHT (99 aa).

In terms of assembly, self-associates (via leucine-rich repeats), giving rise to homooligomers. Interacts with FGFR1. Interacts with FGFR2. Interacts (via extracellular domain) with ADGRL1/LPHN1. Interacts (via extracellular domain) with ADGRL3 (via olfactomedin-like domain). Interacts (via extracellular domain) with UNC5D (via the first Ig-like domain). Can also interact (via extracellular domain) with UNC5B, but with much lower affinity. Interacts (via extracellular domain) with FN1. In terms of processing, N-glycosylated. Proteolytic cleavage in the juxtamembrane region gives rise to a soluble ectodomain. Cleavage is probably effected by a metalloprotease. In terms of tissue distribution, detected in adult brain (at protein level).

Its subcellular location is the cell membrane. The protein resides in the endoplasmic reticulum membrane. The protein localises to the cell junction. It is found in the focal adhesion. It localises to the secreted. Its subcellular location is the extracellular space. The protein resides in the extracellular matrix. The protein localises to the synapse. It is found in the synaptosome. It localises to the microsome membrane. Its function is as follows. Functions in cell-cell adhesion, cell migration and axon guidance. Mediates cell-cell adhesion via its interactions with ADGRL3 and probably also other latrophilins that are expressed at the surface of adjacent cells. May play a role in the migration of cortical neurons during brain development via its interaction with UNC5D. Mediates axon growth cone collapse and plays a repulsive role in neuron guidance via its interaction with UNC5D, and possibly also other UNC-5 family members. Plays a role in fibroblast growth factor-mediated signaling cascades. Required for normal organization of the cardiac basement membrane during embryogenesis, and for normal embryonic epicardium and heart morphogenesis. In Mus musculus (Mouse), this protein is Leucine-rich repeat transmembrane protein FLRT2.